The chain runs to 288 residues: MSALRALLGLGLLAAGSRLRRVPGRAGACPAGSAWWEARRPHSGGGGEPAGMASPAVKYLSQEEAQAVDEELFNEYQFSVDQLMELAGLSCATAIAKAYPPTSMSRSPPAVLVICGPGNNGGDGLVCARHLKLFGYQPTIYYPKRPNKPLFTALVTQCQKMDIPFLGEMPPEPMLIDELYELVVDAIFGFSFKGDVREPFRTILSVLDGLTVPIASIDIPSGWDVEKGNSGGIQPDLLISLTAPKKSATQFTGRYHYLGGRFVPPALEKKYQLNLPPYPDTECVYRLQ.

The transit peptide at 1 to 48 (MSALRALLGLGLLAAGSRLRRVPGRAGACPAGSAWWEARRPHSGGGGE) directs the protein to the mitochondrion. Residues 65-275 (AQAVDEELFN…ALEKKYQLNL (211 aa)) form the YjeF N-terminal domain. 119 to 123 (NNGGD) provides a ligand contact to (6S)-NADPHX. Asn-120 serves as a coordination point for K(+). Lys-144 bears the N6-succinyllysine mark. Asp-185 serves as a coordination point for K(+). Residues 189-195 (GFSFKGD) and Asp-218 contribute to the (6S)-NADPHX site. Ser-221 serves as a coordination point for K(+).

Belongs to the NnrE/AIBP family. As to quaternary structure, homodimer. Interacts with APOA1 and APOA2. Requires K(+) as cofactor. Undergoes physiological phosphorylation during sperm capacitation, downstream to PKA activation.

The protein localises to the mitochondrion. Its subcellular location is the secreted. It catalyses the reaction (6R)-NADHX = (6S)-NADHX. The enzyme catalyses (6R)-NADPHX = (6S)-NADPHX. Its function is as follows. Catalyzes the epimerization of the S- and R-forms of NAD(P)HX, a damaged form of NAD(P)H that is a result of enzymatic or heat-dependent hydration. This is a prerequisite for the S-specific NAD(P)H-hydrate dehydratase to allow the repair of both epimers of NAD(P)HX. Accelerates cholesterol efflux from endothelial cells to high-density lipoprotein (HDL) and thereby regulates angiogenesis. The polypeptide is NAD(P)H-hydrate epimerase (Canis lupus familiaris (Dog)).